A 662-amino-acid polypeptide reads, in one-letter code: Zinc finger protein 17 (662 aa).

In terms of domain architecture, KRAB spans 8–101 (MVFEDVAIHF…LLKDILHLAE (94 aa)). C2H2-type zinc fingers lie at residues 190–212 (YSCT…QKIH), 218–240 (YECS…QRNH), 246–268 (YKCS…QKIH), 274–296 (YECS…QRIH), 302–324 (YVCS…QKIH), 358–380 (FYCC…QRVH), 386–408 (YECN…QKVH), 414–436 (YECS…QRVH), 442–464 (YECN…QRVH), 470–492 (YECS…QRVH), 498–520 (FECS…QRIH), 526–548 (YECS…RRNH), 554–576 (FECT…QKVH), 582–604 (YKCS…ERVH), 610–632 (YECS…RRIH), and 638–660 (YQCS…QKVH).

Belongs to the krueppel C2H2-type zinc-finger protein family.

The protein localises to the nucleus. May be involved in transcriptional regulation. The chain is Zinc finger protein 17 (ZNF17) from Homo sapiens (Human).